Here is a 491-residue protein sequence, read N- to C-terminus: Angiopoietin-related protein 1 (491 aa).

The signal sequence occupies residues 1–23 (MKAFIWTLSVLFFLLMGIGHGRG). A coiled-coil region spans residues 80 to 168 (ITRMDLENLK…LNVTTEMLKM (89 aa)). Asn160 and Asn188 each carry an N-linked (GlcNAc...) asparagine glycan. Positions 271-491 (FINEGPYKDC…AVQMLIKPID (221 aa)) constitute a Fibrinogen C-terminal domain. 2 cysteine pairs are disulfide-bonded: Cys280-Cys309 and Cys432-Cys445.

The protein resides in the secreted. The sequence is that of Angiopoietin-related protein 1 (ANGPTL1) from Bos taurus (Bovine).